Here is a 365-residue protein sequence, read N- to C-terminus: D-alanine--D-alanine ligase (365 aa).

The ATP-grasp domain occupies 135 to 345 (KLLLKSFNIP…YGSLVDKLIA (211 aa)). 168–223 (KQSLDYPVIVKPAMLGSSIGISIAYNETQIEKCIEEAFAYDLTVVIEKFMRAREIE) serves as a coordination point for ATP. Residues D298, E312, and N314 each contribute to the Mg(2+) site.

The protein belongs to the D-alanine--D-alanine ligase family. Requires Mg(2+) as cofactor. Mn(2+) is required as a cofactor.

It is found in the cytoplasm. It catalyses the reaction 2 D-alanine + ATP = D-alanyl-D-alanine + ADP + phosphate + H(+). It participates in cell wall biogenesis; peptidoglycan biosynthesis. Functionally, cell wall formation. This chain is D-alanine--D-alanine ligase, found in Borrelia turicatae (strain 91E135).